A 572-amino-acid polypeptide reads, in one-letter code: Butyrate--CoA ligase AAE11, peroxisomal (572 aa).

Residues 570–572 (SRL) carry the Microbody targeting signal motif.

This sequence belongs to the ATP-dependent AMP-binding enzyme family. In terms of tissue distribution, expressed in flowers.

It localises to the peroxisome. It carries out the reaction a medium-chain fatty acid + ATP + CoA = a medium-chain fatty acyl-CoA + AMP + diphosphate. Functionally, butyrate--CoA ligase that is active in vitro with medium-chain fatty acids, with a preference for hexanoate and octanoate. The protein is Butyrate--CoA ligase AAE11, peroxisomal (AAE11) of Arabidopsis thaliana (Mouse-ear cress).